Here is a 173-residue protein sequence, read N- to C-terminus: Photosystem I assembly protein Ycf3 (173 aa).

TPR repeat units follow at residues 35–68 (AFSY…EEDP), 72–105 (SYIL…NFKL), and 120–153 (GVQA…APDN).

Belongs to the Ycf3 family.

The protein resides in the plastid. It localises to the chloroplast thylakoid membrane. In terms of biological role, essential for the assembly of the photosystem I (PSI) complex. May act as a chaperone-like factor to guide the assembly of the PSI subunits. The polypeptide is Photosystem I assembly protein Ycf3 (Pyropia yezoensis (Susabi-nori)).